We begin with the raw amino-acid sequence, 74 residues long: Small ribosomal subunit protein bS18 (74 aa).

It belongs to the bacterial ribosomal protein bS18 family. As to quaternary structure, part of the 30S ribosomal subunit. Forms a tight heterodimer with protein bS6.

Its function is as follows. Binds as a heterodimer with protein bS6 to the central domain of the 16S rRNA, where it helps stabilize the platform of the 30S subunit. The polypeptide is Small ribosomal subunit protein bS18 (Rhizorhabdus wittichii (strain DSM 6014 / CCUG 31198 / JCM 15750 / NBRC 105917 / EY 4224 / RW1) (Sphingomonas wittichii)).